We begin with the raw amino-acid sequence, 706 residues long: MEKTFNLTRRDDGIAILTMDVPGETMNTLKAQFGPEISEILAEIKSDSSIRGLVLISGKKDSFVAGADISMLDACKTAGDAKALSQQGHVVFNELEALTIPVVAAIHGACLGGGLELALACHQRVCSDDGKTMLGVPEVQLGLLPGGGGTQRLPRLVGITTALDMMLTGKKIRPKQALKMGLVNDVVPQTILLQTAVEMALAGKRAPKPVKKSLVNQVLEGTSFGRNIIFDQATKQVEKKTQGNYPAPAKIIDCVRQGIAKGMQKGLEVEASHFAELVVSKESEALRSIFFATTEMKKETGAEGASPRKVKKAVILGGGLMGGGIASVTTTKAKIPVRVKDISEKGLSNALAYAYKLLDKGVKRRHMTPAARDNLMALMTTTTEYKGVKDADIVVEAVFEDLALKHQMVKDIERECGEHTIFASNTSSLPISQIAEAATRPENVIGLHYFSPVEKMPLVEVIAHAKTSPETIATTVAFARKQGKTPIVVQDGAGFYVNRILALYMNEAAQLLLEGQSVEHLDKALVKFGFPVGPITLLDEVGIDVGAKISPILEKELGERFKAPAAFDKLLSDDRKGRKNGKGFYQYGASSKKAKAVDESVYGVLGIKPGTNKDAKAVAERCVVQMLNEAVRCLEDGIIASPRDGDIGAIFGIGFPPFLGGPFHYIDTLGAANLVKILESYQSQFGNRFEPCERLKTMAQENAHFF.

The interval Met-1–Pro-188 is enoyl-CoA hydratase. The interval Arg-308–Phe-706 is 3-hydroxyacyl-CoA dehydrogenase.

In the N-terminal section; belongs to the enoyl-CoA hydratase/isomerase family. It in the central section; belongs to the 3-hydroxyacyl-CoA dehydrogenase family. Heterotetramer of two alpha chains (FadJ) and two beta chains (FadI).

The protein resides in the cytoplasm. It carries out the reaction a (3S)-3-hydroxyacyl-CoA = a (2E)-enoyl-CoA + H2O. The catalysed reaction is a 4-saturated-(3S)-3-hydroxyacyl-CoA = a (3E)-enoyl-CoA + H2O. The enzyme catalyses a (3S)-3-hydroxyacyl-CoA + NAD(+) = a 3-oxoacyl-CoA + NADH + H(+). It catalyses the reaction (3S)-3-hydroxybutanoyl-CoA = (3R)-3-hydroxybutanoyl-CoA. It functions in the pathway lipid metabolism; fatty acid beta-oxidation. Catalyzes the formation of a hydroxyacyl-CoA by addition of water on enoyl-CoA. Also exhibits 3-hydroxyacyl-CoA epimerase and 3-hydroxyacyl-CoA dehydrogenase activities. In Shewanella baltica (strain OS185), this protein is Fatty acid oxidation complex subunit alpha.